We begin with the raw amino-acid sequence, 931 residues long: Transportin (931 aa).

HEAT repeat units lie at residues 10–37, 42–79, 88–121, 127–164, 171–201, 214–241, 253–280, 296–421, 430–459, 471–498, 512–545, 553–586, 594–632, 640–693, 704–735, 743–776, 784–819, 827–860, and 869–900; these read GLKQ…EELD, VPDY…QYFE, YIKR…KSCF, LLPA…LDSD, NQLI…YFII, FLKG…VTLV, KDVI…FWTA, PVLV…LSGI, VTLP…GAIA, SKVI…TLSR, LHPL…EEEA, LQMI…AKVV, ELIN…SSIG, SLFF…GIGT, LPHL…KFCL, PDYL…IRMP, VAIR…IVSP, DKFI…INNN, and VYIC…KTSM. The 68-residue stretch at 32–99 folds into the Importin N-terminal domain; the sequence is IREELDKFHS…KREILPVLSD (68 aa). A disordered region spans residues 317 to 401; the sequence is DQGDDSMTPD…DDDDDDDGFE (85 aa). Over residues 358–381 the composition is skewed to low complexity; the sequence is DNNNNSNNNNSSNNNSSNNNNNNN. The segment covering 382 to 401 has biased composition (acidic residues); sequence NEDDEEYNDDDDDDDDDGFE.

This sequence belongs to the importin beta family. Importin beta-2 subfamily. Forms a complex with an importin alpha subunit.

It is found in the cytoplasm. The protein localises to the nucleus envelope. Functions in nuclear protein import via a substrate-importin alpha-beta transport complex that passes though the nuclear pore complexes (NPC). Mediates docking of the substrate-importin complex to distinct nucleoporins. This Dictyostelium discoideum (Social amoeba) protein is Transportin (tnpo).